A 305-amino-acid polypeptide reads, in one-letter code: HPr kinase/phosphorylase (305 aa).

Catalysis depends on residues histidine 138 and lysine 159. 153-160 (GESGIGKS) is an ATP binding site. Residue serine 160 participates in Mg(2+) binding. Aspartate 177 (proton acceptor; for phosphorylation activity. Proton donor; for dephosphorylation activity) is an active-site residue. The interval 201 to 210 (IEIRGIGILD) is important for the catalytic mechanism of both phosphorylation and dephosphorylation. Residue glutamate 202 participates in Mg(2+) binding. Arginine 243 is a catalytic residue. The segment at 264–269 (PVRPGR) is important for the catalytic mechanism of dephosphorylation.

It belongs to the HPrK/P family. Homohexamer. Mg(2+) is required as a cofactor.

It carries out the reaction [HPr protein]-L-serine + ATP = [HPr protein]-O-phospho-L-serine + ADP + H(+). The catalysed reaction is [HPr protein]-O-phospho-L-serine + phosphate + H(+) = [HPr protein]-L-serine + diphosphate. In terms of biological role, catalyzes the ATP- as well as the pyrophosphate-dependent phosphorylation of a specific serine residue in HPr, a phosphocarrier protein of the phosphoenolpyruvate-dependent sugar phosphotransferase system (PTS). HprK/P also catalyzes the pyrophosphate-producing, inorganic phosphate-dependent dephosphorylation (phosphorolysis) of seryl-phosphorylated HPr (P-Ser-HPr). The two antagonistic activities of HprK/P are regulated by several intracellular metabolites, which change their concentration in response to the absence or presence of rapidly metabolisable carbon sources (glucose, fructose, etc.) in the growth medium. Therefore, by controlling the phosphorylation state of HPr, HPrK/P is a sensor enzyme that plays a major role in the regulation of carbon metabolism and sugar transport: it mediates carbon catabolite repression (CCR), and regulates PTS-catalyzed carbohydrate uptake and inducer exclusion. In Caldanaerobacter subterraneus subsp. tengcongensis (strain DSM 15242 / JCM 11007 / NBRC 100824 / MB4) (Thermoanaerobacter tengcongensis), this protein is HPr kinase/phosphorylase.